Reading from the N-terminus, the 315-residue chain is NADH-cytochrome b5 reductase-like (315 aa).

Positions 19 to 55 (RPTEPLPSQCCGSGCSPCVFDLYHRDLARWEAAQASK) constitute an Oxidoreductase-like domain. The region spanning 75–177 (ETFVAFCIIA…RGPFGDFFYK (103 aa)) is the FAD-binding FR-type domain. FAD contacts are provided by residues 157–172 (ESWR…GPFG) and 182–214 (GELL…TFVT).

It belongs to the flavoprotein pyridine nucleotide cytochrome reductase family. FAD is required as a cofactor.

It carries out the reaction 2 Fe(III)-[cytochrome b5] + NADH = 2 Fe(II)-[cytochrome b5] + NAD(+) + H(+). Functionally, NADH-cytochrome b5 reductases are involved in desaturation and elongation of fatty acids, cholesterol biosynthesis, drug metabolism, and, in erythrocyte, methemoglobin reduction. This is NADH-cytochrome b5 reductase-like (CYB5RL) from Homo sapiens (Human).